The chain runs to 860 residues: DNA mismatch repair protein MutS (860 aa).

621-628 contributes to the ATP binding site; sequence GPNMGGKS.

It belongs to the DNA mismatch repair MutS family.

Functionally, this protein is involved in the repair of mismatches in DNA. It is possible that it carries out the mismatch recognition step. This protein has a weak ATPase activity. The sequence is that of DNA mismatch repair protein MutS from Salmonella arizonae (strain ATCC BAA-731 / CDC346-86 / RSK2980).